The sequence spans 364 residues: tRNA 2-selenouridine synthase (364 aa).

The Rhodanese domain occupies 14-137; the sequence is LIADTPIIDV…LRQTAIQATI (124 aa). The active-site S-selanylcysteine intermediate is cysteine 97.

This sequence belongs to the SelU family. Monomer.

It catalyses the reaction 5-methylaminomethyl-2-thiouridine(34) in tRNA + selenophosphate + (2E)-geranyl diphosphate + H2O + H(+) = 5-methylaminomethyl-2-selenouridine(34) in tRNA + (2E)-thiogeraniol + phosphate + diphosphate. The catalysed reaction is 5-methylaminomethyl-2-thiouridine(34) in tRNA + (2E)-geranyl diphosphate = 5-methylaminomethyl-S-(2E)-geranyl-thiouridine(34) in tRNA + diphosphate. It carries out the reaction 5-methylaminomethyl-S-(2E)-geranyl-thiouridine(34) in tRNA + selenophosphate + H(+) = 5-methylaminomethyl-2-(Se-phospho)selenouridine(34) in tRNA + (2E)-thiogeraniol. The enzyme catalyses 5-methylaminomethyl-2-(Se-phospho)selenouridine(34) in tRNA + H2O = 5-methylaminomethyl-2-selenouridine(34) in tRNA + phosphate. Its function is as follows. Involved in the post-transcriptional modification of the uridine at the wobble position (U34) of tRNA(Lys), tRNA(Glu) and tRNA(Gln). Catalyzes the conversion of 2-thiouridine (S2U-RNA) to 2-selenouridine (Se2U-RNA). Acts in a two-step process involving geranylation of 2-thiouridine (S2U) to S-geranyl-2-thiouridine (geS2U) and subsequent selenation of the latter derivative to 2-selenouridine (Se2U) in the tRNA chain. The chain is tRNA 2-selenouridine synthase from Escherichia coli (strain K12 / MC4100 / BW2952).